Consider the following 327-residue polypeptide: rRNA 2'-O-methyltransferase fibrillarin (327 aa).

The tract at residues methionine 1 to valine 96 is disordered. An asymmetric dimethylarginine mark is found at arginine 10, arginine 19, arginine 44, arginine 49, arginine 55, arginine 65, arginine 69, and arginine 78. Residues glycine 22 to glycine 56 show a composition bias toward basic and acidic residues. Residues aspartate 73–glycine 90 show a composition bias toward gly residues. Residues threonine 181–threonine 182, glutamate 200–phenylalanine 201, aspartate 225–alanine 226, and aspartate 245–glutamine 248 each bind S-adenosyl-L-methionine.

It belongs to the methyltransferase superfamily. Fibrillarin family. As to quaternary structure, component of box C/D small nucleolar ribonucleoprotein (snoRNP) particles. It is associated with the U3, U8 and U13 small nuclear RNAs. By homology to other fibrillarins, some or all of the N-terminal domain arginines are modified to asymmetric dimethylarginine (DMA).

It localises to the nucleus. Its subcellular location is the nucleolus. It carries out the reaction L-glutaminyl-[histone H2A] + S-adenosyl-L-methionine = N(5)-methyl-L-glutaminyl-[histone H2A] + S-adenosyl-L-homocysteine + H(+). In terms of biological role, S-adenosyl-L-methionine-dependent methyltransferase that has the ability to methylate both RNAs and proteins. Involved in pre-rRNA processing. Utilizes the methyl donor S-adenosyl-L-methionine to catalyze the site-specific 2'-hydroxyl methylation of ribose moieties in pre-ribosomal RNA. Site specificity is provided by a guide RNA that base pairs with the substrate. Methylation occurs at a characteristic distance from the sequence involved in base pairing with the guide RNA. Also acts as a protein methyltransferase by mediating methylation of 'Gln-105' of histone H2A (H2AQ105me), a modification that impairs binding of the FACT complex and is specifically present at 35S ribosomal DNA locus. The sequence is that of rRNA 2'-O-methyltransferase fibrillarin from Giardia intestinalis (Giardia lamblia).